A 392-amino-acid polypeptide reads, in one-letter code: Cytochrome P450 monooxygenase ppzE (392 aa).

A helical membrane pass occupies residues 10–30 (LELVWFVALYPFACWTLFAVL). An N-linked (GlcNAc...) asparagine glycan is attached at Asn-319. Cys-353 is a binding site for heme. Asn-372 carries an N-linked (GlcNAc...) asparagine glycan.

The protein belongs to the cytochrome P450 family. Requires heme as cofactor.

Its subcellular location is the membrane. It participates in secondary metabolite biosynthesis. Functionally, cytochrome P450 monooxygenase; part of the gene cluster that mediates the biosynthesis of pyrrolopyrazines, secondary metabolites showing insecticidal activity. The role of ppzE within the pathway has still to be determined. The single multifunctional NRPS ppzA is sufficient to produce peramine via condensation of 1-pyrroline-5-carboxylate and arginine, N-methylation of the alpha-amino group of arginine and reduction of the thioester and the cyclization to form an iminium ion resulting in release from the peptide synthetase. Deprotonation of this intermediate and oxidation of the pyrroline ring would give rise to peramine. In Epichloe species that produce only peramine, the peramine synthetase gene is not localized in a gene cluster, in contrast to Metarhizium species that contain additional pyrrolopyrazine biosynthesis genes. The 2-oxoglutarate-Fe(II) type oxidoreductase ppzC hydroxylates peramine to yield the newly identified compound 8-hydroxyperamine whereas ppzD converts L-proline into trans-4-hydroxy-L-proline, a precursor of peramine biosynthesis. The protein is Cytochrome P450 monooxygenase ppzE of Metarhizium rileyi (strain RCEF 4871) (Nomuraea rileyi).